The primary structure comprises 2146 residues: Conidial pigment polyketide synthase alb1 (2146 aa).

Residues 8-244 (YLFGDQTISC…KAPGVSGPYH (237 aa)) are N-terminal acylcarrier protein transacylase domain (SAT). The region spanning 375–806 (RSKIAIIGMS…GGNTALLMED (432 aa)) is the Ketosynthase family 3 (KS3) domain. Catalysis depends on for beta-ketoacyl synthase activity residues cysteine 547, histidine 682, and histidine 724. Residues 911-1232 (GFVFTGQGAQ…LSTLHLAGVE (322 aa)) are malonyl-CoA:ACP transacylase (MAT) domain. Serine 1001 functions as the For acyl/malonyl transferase activity in the catalytic mechanism. A product template (PT) domain region spans residues 1290–1602 (TTAAQKIVEC…ARKILDTVLP (313 aa)). Positions 1294-1427 (QKIVECREDG…VKLFNCAERE (134 aa)) are N-terminal hotdog fold. Positions 1294–1598 (QKIVECREDG…FQALARKILD (305 aa)) constitute a PKS/mFAS DH domain. Catalysis depends on histidine 1326, which acts as the Proton acceptor; for dehydratase activity. Positions 1453 to 1598 (AHRMQRGMVY…FQALARKILD (146 aa)) are C-terminal hotdog fold. Catalysis depends on aspartate 1511, which acts as the Proton donor; for dehydratase activity. Positions 1611-1644 (GAPAPAPARPIGEKKAPPPIKVTGPPKPNPSNAR) are disordered. Pro residues predominate over residues 1627-1639 (PPPIKVTGPPKPN). Residues 1647–1721 (SPVVARALEI…DFKAYLAEKG (75 aa)) enclose the Carrier 1 domain. Position 1681 is an O-(pantetheine 4'-phosphoryl)serine (serine 1681). A disordered region spans residues 1724-1769 (DSSSPEPSSEPESKFSFNSDASSEASSGLTTPGITSPVKHEAPKGG). Positions 1738–1750 (FSFNSDASSEASS) are enriched in low complexity. Residues 1768–1845 (GGQNKVWKSI…AVQAALDLKP (78 aa)) form the Carrier 2 domain. Serine 1805 is modified (O-(pantetheine 4'-phosphoryl)serine). Residues 1892 to 2019 (KLFMFPDGSG…SIGLFGDGKR (128 aa)) are claisen cyclase domain. Serine 1962 functions as the For Claisen cyclase activity in the catalytic mechanism.

Its subcellular location is the endosome. The catalysed reaction is 6 malonyl-CoA + acetyl-CoA + 6 H(+) = naphtopyrone YWA1 + 6 CO2 + 7 CoA + H2O. It participates in pigment biosynthesis; melanin biosynthesis. In terms of biological role, non-reducing polyketide synthase; part of the gene cluster that mediates the biosynthesis of dihydroxynaphthalene (DHN)-melanin, a bluish-green pigment and a structural component of the conidial wall. The first step of the pathway is the production of the heptaketide naphtopyrone YWA1 by the polyketide synthase alb1 though condensation of acetyl-CoA with malonyl-CoA. The naphtopyrone YWA1 is then converted to the pentaketide 1,3,6,8-tetrahydroxynaphthalene (1,3,6,8-THN) by the heptaketide hydrolyase ayg1 though chain-length shortening. 1,3,6,8-THN is substrate of the hydroxynaphthalene reductase arp2 to yield scytalone. The scytalone dehydratase arp1 then reduces scytalone to 1,3,8-THN. 1,3,8-THN is also substrate of the hydroxynaphthalene reductase arp2 to yield vermelone. Vermelone is further converted by the multicopper oxidase abr1 to 1,8-DHN. Finally the laccase abr2 transforms 1,8-DHN to DHN-melanin. DHN-melanin biosynthesis appears to be initiated in endosomes where early enzymes (abl1, ayg1, arp1 and arp2) localize, with exocytosis leading to melanin deposition on the cell surface where late enzymes (abr1 and abr2) localize. DHN-melanin is an important structural component of the outer cell wall and is required for the presence of conidial surface hydrophobins. DHN-melanin also plays a crucial role in fungal virulence, including a protective role against the host's immune defenses. DHN-melanin protects also conidia against amoeba predation. This is Conidial pigment polyketide synthase alb1 from Aspergillus fumigatus (strain ATCC MYA-4609 / CBS 101355 / FGSC A1100 / Af293) (Neosartorya fumigata).